The sequence spans 386 residues: Enoyl-[acyl-carrier-protein] reductase 1, mitochondrial (386 aa).

Residues 1 to 22 constitute a mitochondrion transit peptide; it reads MYSVLKQSIRPRLLATHNQFRT. Tyrosine 79 serves as the catalytic Proton donor. NADP(+)-binding positions include asparagine 172, 199–202, 222–224, 296–299, 321–323, and lysine 381; these read TSAV, RDR, YGGM, and FWV.

Belongs to the zinc-containing alcohol dehydrogenase family. Quinone oxidoreductase subfamily. As to quaternary structure, homodimer and heterodimer with ETR2.

Its subcellular location is the mitochondrion. It carries out the reaction a 2,3-saturated acyl-[ACP] + NADP(+) = a (2E)-enoyl-[ACP] + NADPH + H(+). The enzyme catalyses (2E,4E)-hexadienoyl-CoA + NADPH + H(+) = (4E)-hexenoyl-CoA + NADP(+). It catalyses the reaction (2E)-hexenoyl-CoA + NADPH + H(+) = hexanoyl-CoA + NADP(+). Its function is as follows. Catalyzes the NADPH-dependent reduction of trans-2-enoyl thioesters in mitochondrial fatty acid synthesis (fatty acid synthesis type II). Fatty acid chain elongation in mitochondria uses acyl carrier protein (ACP) as an acyl group carrier, but the enzyme accepts both ACP and CoA thioesters as substrates in vitro. Required for respiration and the maintenance of the mitochondrial compartment. The sequence is that of Enoyl-[acyl-carrier-protein] reductase 1, mitochondrial (ETR1) from Candida tropicalis (Yeast).